The chain runs to 491 residues: Ketol-acid reductoisomerase (NADP(+)) (491 aa).

Positions 15–208 constitute a KARI N-terminal Rossmann domain; sequence AQLGKCRFMG…GGHRAGVLES (194 aa). Residues 45-48, arginine 68, arginine 76, serine 78, and 108-110 each bind NADP(+); these read CGAQ and DKQ. Residue histidine 132 is part of the active site. An NADP(+)-binding site is contributed by glycine 158. KARI C-terminal knotted domains follow at residues 209–344 and 345–484; these read SFVA…TAPQ and YEGK…MTDM. Mg(2+) contacts are provided by aspartate 217, glutamate 221, glutamate 389, and glutamate 393. Serine 414 serves as a coordination point for substrate.

Belongs to the ketol-acid reductoisomerase family. The cofactor is Mg(2+).

It catalyses the reaction (2R)-2,3-dihydroxy-3-methylbutanoate + NADP(+) = (2S)-2-acetolactate + NADPH + H(+). The catalysed reaction is (2R,3R)-2,3-dihydroxy-3-methylpentanoate + NADP(+) = (S)-2-ethyl-2-hydroxy-3-oxobutanoate + NADPH + H(+). It participates in amino-acid biosynthesis; L-isoleucine biosynthesis; L-isoleucine from 2-oxobutanoate: step 2/4. The protein operates within amino-acid biosynthesis; L-valine biosynthesis; L-valine from pyruvate: step 2/4. Involved in the biosynthesis of branched-chain amino acids (BCAA). Catalyzes an alkyl-migration followed by a ketol-acid reduction of (S)-2-acetolactate (S2AL) to yield (R)-2,3-dihydroxy-isovalerate. In the isomerase reaction, S2AL is rearranged via a Mg-dependent methyl migration to produce 3-hydroxy-3-methyl-2-ketobutyrate (HMKB). In the reductase reaction, this 2-ketoacid undergoes a metal-dependent reduction by NADPH to yield (R)-2,3-dihydroxy-isovalerate. The chain is Ketol-acid reductoisomerase (NADP(+)) from Escherichia coli (strain ATCC 8739 / DSM 1576 / NBRC 3972 / NCIMB 8545 / WDCM 00012 / Crooks).